Consider the following 593-residue polypeptide: UvrABC system protein C (593 aa).

The region spanning 17 to 94 is the GIY-YIG domain; sequence MEPGCYLMKD…IKQYQPRYNI (78 aa). The UVR domain maps to 199 to 234; it reads KTILKSLEERMLTASESLDFERAKEYRDLIQHIQNL.

The protein belongs to the UvrC family. As to quaternary structure, interacts with UvrB in an incision complex.

The protein resides in the cytoplasm. In terms of biological role, the UvrABC repair system catalyzes the recognition and processing of DNA lesions. UvrC both incises the 5' and 3' sides of the lesion. The N-terminal half is responsible for the 3' incision and the C-terminal half is responsible for the 5' incision. This is UvrABC system protein C from Staphylococcus aureus (strain Mu3 / ATCC 700698).